The primary structure comprises 336 residues: Octanoyltransferase (336 aa).

A compositionally biased stretch (polar residues) spans 1–16 (MPKSALMSSSFQTSVS). Disordered stretches follow at residues 1–22 (MPKS…PLPV) and 48–88 (QGKG…GGGR). Residues 1–92 (MPKSALMSSS…AAGGGRTIRD (92 aa)) form a unknown region. Residues 93–336 (VKEAAFDVLD…GQEALSVASP (244 aa)) are lipB domain. Positions 124-318 (VGGRPTLLLV…AFALTFADYD (195 aa)) constitute a BPL/LPL catalytic domain. Residues 170-177 (RGGDVTYH), 244-246 (SIG), and 257-259 (GIG) contribute to the substrate site. Cys275 functions as the Acyl-thioester intermediate in the catalytic mechanism.

It in the C-terminal section; belongs to the LipB family.

It is found in the cytoplasm. It catalyses the reaction octanoyl-[ACP] + L-lysyl-[protein] = N(6)-octanoyl-L-lysyl-[protein] + holo-[ACP] + H(+). The protein operates within protein modification; protein lipoylation via endogenous pathway; protein N(6)-(lipoyl)lysine from octanoyl-[acyl-carrier-protein]: step 1/2. Catalyzes the transfer of endogenously produced octanoic acid from octanoyl-acyl-carrier-protein onto the lipoyl domains of lipoate-dependent enzymes. Lipoyl-ACP can also act as a substrate although octanoyl-ACP is likely to be the physiological substrate. In Deinococcus radiodurans (strain ATCC 13939 / DSM 20539 / JCM 16871 / CCUG 27074 / LMG 4051 / NBRC 15346 / NCIMB 9279 / VKM B-1422 / R1), this protein is Octanoyltransferase.